The following is a 479-amino-acid chain: PRAME family member 18 (479 aa).

Residues 15-38 (QSLLRDQALAISVLDELPRELFPP) form an LRR 1 repeat. The stretch at 97-124 (RWKLQVLEMRDVDENFWTIWSGARLLSC) is one LRR 1; degenerate repeat. An LRR 2; degenerate repeat occupies 179–203 (HLCCTKVVNYSMSILNFRNILETVY). Residues 204 to 230 (PDSIQVLEIWNMCWLCMIVEFSRYLSQ) form an LRR 3; degenerate repeat. The stretch at 231 to 265 (MRNLRKLFISDGCRYLLSSDSQEQLVAEFSSVLLR) is one LRR 4; degenerate repeat. LRR repeat units follow at residues 266–291 (LENLQMLYVRRVCFFRGHLDQLIRCL), 292–323 (RSPLETLALTYGFLEEEDLKCLPRYPSLSQLK), 324–342 (QLNLSHGALRFIRLEPLRA), 348–375 (AATLQTLFLVDCGIGYSKLRVILPALSR), and 376–400 (CSNLTTFCFHGNDTSMDALKDLLRH).

The protein belongs to the PRAME family.

In Homo sapiens (Human), this protein is PRAME family member 18.